The chain runs to 78 residues: uncharacterized protein (78 aa).

This is an uncharacterized protein from Bacillus subtilis (strain 168).